We begin with the raw amino-acid sequence, 939 residues long: Tyrosine-protein kinase Shark (939 aa).

Residues 10–106 (WYHGNLSREA…GLPTKLTVPL (97 aa)) form the SH2 1 domain. ANK repeat units lie at residues 153–185 (DGQT…SSDS), 186–218 (FGCQ…GRNI), and 220–252 (NGYV…PRTS). In terms of domain architecture, SH2 2 spans 288–403 (WYHGTLTREE…GLPVSLKYPV (116 aa)). Disordered stretches follow at residues 410-446 (EVPS…QHPH) and 476-505 (ALFD…SLAG). Positions 496-505 (ESSVSGSLAG) are enriched in polar residues. A Protein kinase domain is found at 662-921 (LVLDREIGHG…PTFVYLTEFF (260 aa)). Residues 668-676 (IGHGEFGSV) and lysine 698 each bind ATP. Aspartate 789 acts as the Proton acceptor in catalysis. A Phosphotyrosine modification is found at tyrosine 927.

Belongs to the protein kinase superfamily. Tyr protein kinase family. Interacts with drpr; this is required for the recruitment of drpr and glial cells to severed axons and for the phagocytosis of axonal debris by glial cells following axon injury. Gastrulation embryos show expression in ectodermal cells along the cephalic furrow and ventral midline. Proctodeum, stomodeum and their derived structures (foregut, atrium, pharynx, esophagus and hindgut) continue to show expression from stage 8-9 to late embryos. Other ectodermally derived structures (frontal sac, salivary gland and labium) and developing tracheal system also show expression.

It localises to the cytoplasm. It catalyses the reaction L-tyrosyl-[protein] + ATP = O-phospho-L-tyrosyl-[protein] + ADP + H(+). In terms of biological role, following axon injury, required for recruitment of drpr and glial cells to severed axons and for glial clearance of severed axons from the central nervous system. Together with Src42a and drpr, promotes the migration of macrophages to sites of wounding as part of a signaling cascade where Scr42a detects production of hydrogen peroxide at wound sites which triggers phosphorylation of drpr and subsequent recruitment and activation of shark. May be involved in signal transduction on the apical surface of ectodermal epithelial cells, regulating their polarity during invagination. Crumbs (crb) may be the intracellular signal. The protein is Tyrosine-protein kinase Shark of Drosophila melanogaster (Fruit fly).